A 209-amino-acid chain; its full sequence is MSKQKHSASSGRWLKEHFDDKYANEARKKGYRSRAYFKIDEIQTKDKLLKPGMTVVDLGAAPGGWSQYAAKIVGDSGQIIACDLLPMDPIAGVSFLQGDFRDDAVLEALLDRIQPLMVDVVMSDMAPNIAGNNSVDQPRAMYLVELALDMCRQVLAPNGSFVVKVFQGEGFDQYVKEVRDMFKVVKIRKPDSSRARSREVFVVATGYKG.

5 residues coordinate S-adenosyl-L-methionine: G63, W65, D83, D99, and D124. K164 functions as the Proton acceptor in the catalytic mechanism.

This sequence belongs to the class I-like SAM-binding methyltransferase superfamily. RNA methyltransferase RlmE family.

It is found in the cytoplasm. It carries out the reaction uridine(2552) in 23S rRNA + S-adenosyl-L-methionine = 2'-O-methyluridine(2552) in 23S rRNA + S-adenosyl-L-homocysteine + H(+). In terms of biological role, specifically methylates the uridine in position 2552 of 23S rRNA at the 2'-O position of the ribose in the fully assembled 50S ribosomal subunit. This Vibrio parahaemolyticus serotype O3:K6 (strain RIMD 2210633) protein is Ribosomal RNA large subunit methyltransferase E.